We begin with the raw amino-acid sequence, 170 residues long: Adenine phosphoribosyltransferase (170 aa).

The protein belongs to the purine/pyrimidine phosphoribosyltransferase family. As to quaternary structure, homodimer.

The protein localises to the cytoplasm. The enzyme catalyses AMP + diphosphate = 5-phospho-alpha-D-ribose 1-diphosphate + adenine. It functions in the pathway purine metabolism; AMP biosynthesis via salvage pathway; AMP from adenine: step 1/1. Functionally, catalyzes a salvage reaction resulting in the formation of AMP, that is energically less costly than de novo synthesis. The polypeptide is Adenine phosphoribosyltransferase (Brachyspira hyodysenteriae (strain ATCC 49526 / WA1)).